A 264-amino-acid polypeptide reads, in one-letter code: Small ribosomal subunit protein uS2 (264 aa).

Residues 228-264 form a disordered region; sequence VDTSATVDEEEAEVAEETESMESAEDLDADLIEEEAE. Over residues 234 to 264 the composition is skewed to acidic residues; the sequence is VDEEEAEVAEETESMESAEDLDADLIEEEAE.

Belongs to the universal ribosomal protein uS2 family.

This Symbiobacterium thermophilum (strain DSM 24528 / JCM 14929 / IAM 14863 / T) protein is Small ribosomal subunit protein uS2.